The following is a 217-amino-acid chain: Small ribosomal subunit protein uS3 (217 aa).

In terms of domain architecture, KH type-2 spans 40 to 110; that stretch reads IRDLINNSFN…EVYINIHEVR (71 aa).

The protein belongs to the universal ribosomal protein uS3 family. In terms of assembly, part of the 30S ribosomal subunit. Forms a tight complex with proteins S10 and S14.

Binds the lower part of the 30S subunit head. Binds mRNA in the 70S ribosome, positioning it for translation. This is Small ribosomal subunit protein uS3 from Rickettsia canadensis (strain McKiel).